Reading from the N-terminus, the 740-residue chain is Glycerol dehydrogenase large subunit (740 aa).

The first 29 residues, 1-29 (MRRPYLLATAAGLALACSPLIAHAQFAPA), serve as a signal peptide directing secretion. 2 disordered regions span residues 28–105 (PAGA…GDWV) and 442–468 (LPVE…PWSV). A compositionally biased stretch (low complexity) spans 34–43 (EPSSSVPGPG). The span at 46-58 (SEPTENSPKSQSY) shows a compositional bias: polar residues.

It belongs to the bacterial PQQ dehydrogenase family. The cofactor is pyrroloquinoline quinone.

The protein resides in the secreted. It carries out the reaction glycerol + A = dihydroxyacetone + AH2. Catalyzes the oxidation of glycerol to glycerone. Also acts, more slowly, on a number of other polyols including D-sorbitol, D-arabinitol, D-mannitol, meso-erythritol, adonitol and propylene glycol. This Gluconobacter thailandicus protein is Glycerol dehydrogenase large subunit (sldA).